Reading from the N-terminus, the 93-residue chain is Pyrimidine/purine nucleoside phosphorylase (93 aa).

The protein belongs to the nucleoside phosphorylase PpnP family.

The enzyme catalyses a purine D-ribonucleoside + phosphate = a purine nucleobase + alpha-D-ribose 1-phosphate. The catalysed reaction is adenosine + phosphate = alpha-D-ribose 1-phosphate + adenine. It catalyses the reaction cytidine + phosphate = cytosine + alpha-D-ribose 1-phosphate. It carries out the reaction guanosine + phosphate = alpha-D-ribose 1-phosphate + guanine. The enzyme catalyses inosine + phosphate = alpha-D-ribose 1-phosphate + hypoxanthine. The catalysed reaction is thymidine + phosphate = 2-deoxy-alpha-D-ribose 1-phosphate + thymine. It catalyses the reaction uridine + phosphate = alpha-D-ribose 1-phosphate + uracil. It carries out the reaction xanthosine + phosphate = alpha-D-ribose 1-phosphate + xanthine. Functionally, catalyzes the phosphorolysis of diverse nucleosides, yielding D-ribose 1-phosphate and the respective free bases. Can use uridine, adenosine, guanosine, cytidine, thymidine, inosine and xanthosine as substrates. Also catalyzes the reverse reactions. The chain is Pyrimidine/purine nucleoside phosphorylase from Aliivibrio fischeri (strain ATCC 700601 / ES114) (Vibrio fischeri).